We begin with the raw amino-acid sequence, 852 residues long: Probable inorganic carbon transporter subunit DabA (852 aa).

Zn(2+) contacts are provided by C370, D372, H554, and C569.

Belongs to the inorganic carbon transporter (TC 9.A.2) DabA family. Forms a complex with DabB. The cofactor is Zn(2+).

Its subcellular location is the cell inner membrane. Functionally, part of an energy-coupled inorganic carbon pump. The polypeptide is Probable inorganic carbon transporter subunit DabA (Novosphingobium aromaticivorans (strain ATCC 700278 / DSM 12444 / CCUG 56034 / CIP 105152 / NBRC 16084 / F199)).